The sequence spans 651 residues: Coronin-like protein (651 aa).

WD repeat units lie at residues 79–110 (GHTA…GIWD), 138–169 (GHAR…KLWN), 180–210 (KHPD…RVWN), and 226–257 (AKNQ…GIWD). The tract at residues 408–609 (APSFHEAKRP…TSPKSLGLKK (202 aa)) is disordered. A compositionally biased stretch (basic and acidic residues) spans 427-451 (LEEKKEQPKVEKPISESEKEVKQEA). A phosphoserine mark is found at Ser-441, Ser-454, and Ser-456. Residues 452 to 465 (PKSPSPLKSASSSS) are compositionally biased toward low complexity. Phosphothreonine is present on residues Thr-517 and Thr-529. 2 stretches are compositionally biased toward basic and acidic residues: residues 523 to 540 (ETKK…ELKP) and 547 to 572 (TDRK…EQEK). Phosphoserine is present on residues Ser-573 and Ser-579. The span at 578–590 (SSITAAKTAITAS) shows a compositional bias: low complexity. Residues 618–650 (VLQLEDVVDKLTKANLDKDERLLKLEQKIGELS) are a coiled coil.

It belongs to the WD repeat coronin family. Binds to F-actin.

The polypeptide is Coronin-like protein (CRN1) (Saccharomyces cerevisiae (strain ATCC 204508 / S288c) (Baker's yeast)).